A 523-amino-acid polypeptide reads, in one-letter code: MTKEEIADKKRKVVDEEVIEKKKSKKHKKDKKDKKEKKDKKHKKHKKEKKGEKEVEVPEKESEKKPEPTSAVASEFYVQSEALTSLPQSDIDEYFKENEIAVEDSLDLALRPLLSFDYLSLDSSIQAEISKFPKPTPIQAVAWPYLLSGKDVVGVAETGSGKTFAFGVPAISHLMNDQKKRGIQVLVISPTRELASQIYDNLIVLTDKVGMQCCCVYGGVPKDEQRIQLKKSQVVVATPGRLLDLLQEGSVDLSQVNYLVLDEADRMLEKGFEEDIKNIIRETDASKRQTLMFTATWPKEVRELASTFMNNPIKVSIGNTDQLTANKRITQIVEVVDPRGKERKLLELLKKYHSGPKKNEKVLIFALYKKEAARVERNLKYNGYNVAAIHGDLSQQQRTQALNEFKSGKSNLLLATDVAARGLDIPNVKTVINLTFPLTVEDYVHRIGRTGRAGQTGTAHTLFTEQEKHLAGGLVNVLNGANQPVPEDLIKFGTHTKKKEHSAYGSFFKDVDLTKKPKKITFD.

A compositionally biased stretch (basic and acidic residues) spans 1–21 (MTKEEIADKKRKVVDEEVIEK). The interval 1–71 (MTKEEIADKK…SEKKPEPTSA (71 aa)) is disordered. Residues 22-48 (KKSKKHKKDKKDKKEKKDKKHKKHKKE) are compositionally biased toward basic residues. Positions 49 to 67 (KKGEKEVEVPEKESEKKPE) are enriched in basic and acidic residues. Positions 114–140 (LSFDYLSLDSSIQAEISKFPKPTPIQA) match the Q motif motif. A Helicase ATP-binding domain is found at 143–315 (WPYLLSGKDV…STFMNNPIKV (173 aa)). 156-163 (AETGSGKT) lines the ATP pocket. The short motif at 262–265 (DEAD) is the DEAD box element. One can recognise a Helicase C-terminal domain in the interval 344–493 (KLLELLKKYH…PVPEDLIKFG (150 aa)).

This sequence belongs to the DEAD box helicase family. DDX5/DBP2 subfamily.

It localises to the nucleus. The protein resides in the nucleolus. The catalysed reaction is ATP + H2O = ADP + phosphate + H(+). Its function is as follows. ATP-dependent RNA helicase required for 60S ribosomal subunit synthesis. Involved in efficient pre-rRNA processing, predominantly at site A3, which is necessary for the normal formation of 25S and 5.8S rRNAs. This is ATP-dependent RNA helicase DBP3 (DBP3) from Saccharomyces cerevisiae (strain ATCC 204508 / S288c) (Baker's yeast).